The primary structure comprises 887 residues: Alanine--tRNA ligase (887 aa).

The segment covering 425–441 has biased composition (basic and acidic residues); that stretch reads MQEQKSRARSDRREKQQ. Positions 425 to 448 are disordered; it reads MQEQKSRARSDRREKQQTGDGAGS. Zn(2+) contacts are provided by His-569, His-573, Cys-672, and His-676.

This sequence belongs to the class-II aminoacyl-tRNA synthetase family. Requires Zn(2+) as cofactor.

It localises to the cytoplasm. It catalyses the reaction tRNA(Ala) + L-alanine + ATP = L-alanyl-tRNA(Ala) + AMP + diphosphate. Its function is as follows. Catalyzes the attachment of alanine to tRNA(Ala) in a two-step reaction: alanine is first activated by ATP to form Ala-AMP and then transferred to the acceptor end of tRNA(Ala). Also edits incorrectly charged Ser-tRNA(Ala) and Gly-tRNA(Ala) via its editing domain. The chain is Alanine--tRNA ligase from Chlorobium luteolum (strain DSM 273 / BCRC 81028 / 2530) (Pelodictyon luteolum).